Here is a 281-residue protein sequence, read N- to C-terminus: uncharacterized protein (281 aa).

2 disordered regions span residues 192-212 and 227-281; these read SNSSVNLSMDKKSDDSKIQET and EDYV…SEEY. The segment covering 200-211 has biased composition (basic and acidic residues); the sequence is MDKKSDDSKIQE. Acidic residues-rich tracts occupy residues 227 to 240 and 249 to 260; these read EDYVDGNEDCISDN and DTDSDLGDLEDP.

This sequence belongs to the cullin family.

This is an uncharacterized protein from Acanthamoeba polyphaga (Amoeba).